A 544-amino-acid chain; its full sequence is Chaperonin GroEL 2 (544 aa).

Residues 29–32, Lys-50, 86–90, Gly-414, and Asp-494 each bind ATP; these read TLGP and DGTTT.

Belongs to the chaperonin (HSP60) family. In terms of assembly, forms a cylinder of 14 subunits composed of two heptameric rings stacked back-to-back. Interacts with the co-chaperonin GroES.

It is found in the cytoplasm. It carries out the reaction ATP + H2O + a folded polypeptide = ADP + phosphate + an unfolded polypeptide.. In terms of biological role, together with its co-chaperonin GroES, plays an essential role in assisting protein folding. The GroEL-GroES system forms a nano-cage that allows encapsulation of the non-native substrate proteins and provides a physical environment optimized to promote and accelerate protein folding. This chain is Chaperonin GroEL 2, found in Psychromonas ingrahamii (strain DSM 17664 / CCUG 51855 / 37).